The primary structure comprises 244 residues: MSTEKILTPESQLKKTKAQQKTAEQIAAERAARKAANKEKRAIILERNAAYQKEYETAERNIIQAKRDAKAAGSYYVEAQHKLVFVVRIKGINKIPPKPRKVLQLLRLTRINSGTFVKVTKATLELLKLIEPYVAYGYPSYSTIRQLVYKRGFGKINKQRVPLSDNAIIEANLGKYGILSIDDLIHEIITVGPHFKQANNFLWPFKLSNPSGGWGVPRKFKHFIQGGSFGNREEFINKLVKAMN.

A compositionally biased stretch (polar residues) spans 1–11; that stretch reads MSTEKILTPES. Positions 1–21 are disordered; sequence MSTEKILTPESQLKKTKAQQK.

It belongs to the universal ribosomal protein uL30 family. Component of the large ribosomal subunit (LSU). Mature yeast ribosomes consist of a small (40S) and a large (60S) subunit. The 40S small subunit contains 1 molecule of ribosomal RNA (18S rRNA) and 33 different proteins (encoded by 57 genes). The large 60S subunit contains 3 rRNA molecules (25S, 5.8S and 5S rRNA) and 46 different proteins (encoded by 81 genes).

It localises to the cytoplasm. Component of the ribosome, a large ribonucleoprotein complex responsible for the synthesis of proteins in the cell. The small ribosomal subunit (SSU) binds messenger RNAs (mRNAs) and translates the encoded message by selecting cognate aminoacyl-transfer RNA (tRNA) molecules. The large subunit (LSU) contains the ribosomal catalytic site termed the peptidyl transferase center (PTC), which catalyzes the formation of peptide bonds, thereby polymerizing the amino acids delivered by tRNAs into a polypeptide chain. The nascent polypeptides leave the ribosome through a tunnel in the LSU and interact with protein factors that function in enzymatic processing, targeting, and the membrane insertion of nascent chains at the exit of the ribosomal tunnel. The sequence is that of Large ribosomal subunit protein uL30B from Saccharomyces cerevisiae (strain ATCC 204508 / S288c) (Baker's yeast).